The primary structure comprises 51 residues: Insulin (51 aa).

Intrachain disulfides connect cysteine 8-cysteine 37, cysteine 20-cysteine 50, and cysteine 36-cysteine 41.

It belongs to the insulin family. Heterodimer of a B chain and an A chain linked by two disulfide bonds.

The protein localises to the secreted. In terms of biological role, insulin decreases blood glucose concentration. It increases cell permeability to monosaccharides, amino acids and fatty acids. It accelerates glycolysis, the pentose phosphate cycle, and glycogen synthesis in liver. In Gadus morhua subsp. callarias (Baltic cod), this protein is Insulin (ins).